Consider the following 265-residue polypeptide: GTP cyclohydrolase FolE2 (265 aa).

The protein belongs to the GTP cyclohydrolase IV family.

The catalysed reaction is GTP + H2O = 7,8-dihydroneopterin 3'-triphosphate + formate + H(+). The protein operates within cofactor biosynthesis; 7,8-dihydroneopterin triphosphate biosynthesis; 7,8-dihydroneopterin triphosphate from GTP: step 1/1. Functionally, converts GTP to 7,8-dihydroneopterin triphosphate. The sequence is that of GTP cyclohydrolase FolE2 from Magnetococcus marinus (strain ATCC BAA-1437 / JCM 17883 / MC-1).